Consider the following 236-residue polypeptide: Orotidine 5'-phosphate decarboxylase (236 aa).

Substrate is bound by residues D16, K38, 65 to 74 (DLKLHDIGNT), T123, R184, Q193, G213, and R214. The active-site Proton donor is the K67.

Belongs to the OMP decarboxylase family. Type 1 subfamily. Homodimer.

The catalysed reaction is orotidine 5'-phosphate + H(+) = UMP + CO2. The protein operates within pyrimidine metabolism; UMP biosynthesis via de novo pathway; UMP from orotate: step 2/2. In terms of biological role, catalyzes the decarboxylation of orotidine 5'-monophosphate (OMP) to uridine 5'-monophosphate (UMP). The polypeptide is Orotidine 5'-phosphate decarboxylase (Methylobacterium sp. (strain 4-46)).